The primary structure comprises 143 residues: UPF0651 protein P31B10.02, mitochondrial (143 aa).

The Oxidoreductase-like domain maps to 48–93; the sequence is IYDGIRVPPKPEEPLNCCQSGCAICVWDVYADDLEEYNRARRKAKR.

Belongs to the UPF0651 family.

The protein resides in the mitochondrion. The chain is UPF0651 protein P31B10.02, mitochondrial from Schizosaccharomyces pombe (strain 972 / ATCC 24843) (Fission yeast).